We begin with the raw amino-acid sequence, 755 residues long: Oligopeptide transporter 1 (755 aa).

13 helical membrane-spanning segments follow: residues 58–78, 82–102, 134–154, 165–185, 226–246, 298–318, 370–390, 434–454, 462–482, 546–566, 614–634, 664–684, and 697–717; these read TWTL…FFGF, QLWV…KLMA, ITIF…ITIV, AAAM…AGIF, FFII…YLFP, FFAI…VLPI, YLSV…CATI, WWFI…CEGF, WWGL…IGVI, FIVQ…TTWW, GIYP…VPFW, AKAV…YYIF, and ILSA…FFAF.

Belongs to the oligopeptide OPT transporter (TC 2.A.67.1) family. As to expression, highly expressed in flowers, and moderately expressed in leaves and stems.

The protein resides in the membrane. Its function is as follows. Involved in the translocation of tetra- and pentapeptides across the cellular membrane in an energy-dependent manner. The polypeptide is Oligopeptide transporter 1 (OPT1) (Arabidopsis thaliana (Mouse-ear cress)).